A 147-amino-acid chain; its full sequence is SsrA-binding protein (147 aa).

Belongs to the SmpB family.

Its subcellular location is the cytoplasm. Required for rescue of stalled ribosomes mediated by trans-translation. Binds to transfer-messenger RNA (tmRNA), required for stable association of tmRNA with ribosomes. tmRNA and SmpB together mimic tRNA shape, replacing the anticodon stem-loop with SmpB. tmRNA is encoded by the ssrA gene; the 2 termini fold to resemble tRNA(Ala) and it encodes a 'tag peptide', a short internal open reading frame. During trans-translation Ala-aminoacylated tmRNA acts like a tRNA, entering the A-site of stalled ribosomes, displacing the stalled mRNA. The ribosome then switches to translate the ORF on the tmRNA; the nascent peptide is terminated with the 'tag peptide' encoded by the tmRNA and targeted for degradation. The ribosome is freed to recommence translation, which seems to be the essential function of trans-translation. The protein is SsrA-binding protein of Mycoplasmopsis agalactiae (strain NCTC 10123 / CIP 59.7 / PG2) (Mycoplasma agalactiae).